Consider the following 481-residue polypeptide: Palmitoyltransferase PFA4 (481 aa).

The interval methionine 1–glutamate 22 is disordered. Residues methionine 1–proline 66 are Cytoplasmic-facing. Residues leucine 67 to tyrosine 87 traverse the membrane as a helical segment. The Lumenal segment spans residues serine 88 to alanine 108. A helical transmembrane segment spans residues leucine 109–leucine 129. Residues cysteine 130–histidine 223 lie on the Cytoplasmic side of the membrane. Residues arginine 181–phenylalanine 231 enclose the DHHC domain. Cysteine 211 functions as the S-palmitoyl cysteine intermediate in the catalytic mechanism. Residues alanine 224–isoleucine 244 traverse the membrane as a helical segment. At serine 245–glutamate 265 the chain is on the lumenal side. A helical transmembrane segment spans residues leucine 266–phenylalanine 286. The Cytoplasmic segment spans residues serine 287–valine 481. Residues serine 370 to valine 481 are disordered. The segment covering serine 418–leucine 431 has biased composition (low complexity). Composition is skewed to basic and acidic residues over residues leucine 441–aspartate 452 and arginine 466–proline 475.

The protein belongs to the DHHC palmitoyltransferase family. PFA4 subfamily.

It localises to the endoplasmic reticulum membrane. It carries out the reaction L-cysteinyl-[protein] + hexadecanoyl-CoA = S-hexadecanoyl-L-cysteinyl-[protein] + CoA. Mediates the reversible addition of palmitate to target proteins, thereby regulating their membrane association and biological function. This is Palmitoyltransferase PFA4 from Mycosarcoma maydis (Corn smut fungus).